A 177-amino-acid chain; its full sequence is Large ribosomal subunit protein uL6 (177 aa).

This sequence belongs to the universal ribosomal protein uL6 family. In terms of assembly, part of the 50S ribosomal subunit.

This protein binds to the 23S rRNA, and is important in its secondary structure. It is located near the subunit interface in the base of the L7/L12 stalk, and near the tRNA binding site of the peptidyltransferase center. The polypeptide is Large ribosomal subunit protein uL6 (Idiomarina loihiensis (strain ATCC BAA-735 / DSM 15497 / L2-TR)).